Consider the following 850-residue polypeptide: Elongation factor 2 (850 aa).

The region spanning 17–351 (KNIRNISVIA…QIALKLPSPL (335 aa)) is the tr-type G domain. GTP contacts are provided by residues 26–33 (AHVDHGKS), 159–162 (NKLD), and 213–215 (SGL). Position 707 is a diphthamide (His-707).

The protein belongs to the TRAFAC class translation factor GTPase superfamily. Classic translation factor GTPase family. EF-G/EF-2 subfamily.

It localises to the cytoplasm. The enzyme catalyses GTP + H2O = GDP + phosphate + H(+). It participates in protein biosynthesis; polypeptide chain elongation. Its function is as follows. Catalyzes the GTP-dependent ribosomal translocation step during translation elongation. During this step, the ribosome changes from the pre-translocational (PRE) to the post-translocational (POST) state as the newly formed A-site-bound peptidyl-tRNA and P-site-bound deacylated tRNA move to the P and E sites, respectively. Catalyzes the coordinated movement of the two tRNA molecules, the mRNA and conformational changes in the ribosome. The protein is Elongation factor 2 (EFT1) of Encephalitozoon cuniculi (strain GB-M1) (Microsporidian parasite).